A 769-amino-acid chain; its full sequence is Discoidin, CUB and LCCL domain-containing protein 2 (769 aa).

A compositionally biased stretch (low complexity) spans 1–29 (MASRAPLRAARSPQDPGGRAAPAATGRAP). The disordered stretch occupies residues 1 to 39 (MASRAPLRAARSPQDPGGRAAPAATGRAPLPSAGWCPLP). The first 63 residues, 1-63 (MASRAPLRAA…LLLLLPDAGA (63 aa)), serve as a signal peptide directing secretion. Over 64-523 (QKGDGCGHTV…VTPSVTKDVA (460 aa)) the chain is Extracellular. 2 disulfide bridges follow: cysteine 69–cysteine 96 and cysteine 123–cysteine 145. The 116-residue stretch at 69 to 184 (CGHTVLGPES…RGFLASYSVI (116 aa)) folds into the CUB domain. An N-linked (GlcNAc...) asparagine glycan is attached at asparagine 92. Asparagine 152 carries an N-linked (GlcNAc...) asparagine glycan. Positions 184-282 (IDKQDLITCL…MVGYLSTSLF (99 aa)) constitute an LCCL domain. The cysteines at positions 212 and 234 are disulfide-linked. Asparagine 269 carries N-linked (GlcNAc...) asparagine glycosylation. A disulfide bridge connects residues cysteine 289 and cysteine 446. The region spanning 289–446 (CYGTLGMESG…IAMKVELLGC (158 aa)) is the F5/8 type C domain. The tract at residues 455–476 (PKLTQPPPPRNSNNLKNTTVHP) is disordered. Positions 465 to 474 (NSNNLKNTTV) are enriched in polar residues. N-linked (GlcNAc...) asparagine glycans are attached at residues asparagine 471 and asparagine 511. A helical transmembrane segment spans residues 524-544 (LAAVLVPVLVMALTTLILILV). Topologically, residues 545–769 (CAWHWRNRKK…EKFDAFKETL (225 aa)) are cytoplasmic. At serine 601 the chain carries Phosphoserine. The tract at residues 719–769 (SCSSGQAQYDTPKGGKPAAAPEELVYQVPQSTQEASGAGRDEKFDAFKETL) is disordered. Residues 757–769 (GRDEKFDAFKETL) are compositionally biased toward basic and acidic residues.

Its subcellular location is the membrane. The chain is Discoidin, CUB and LCCL domain-containing protein 2 (Dcbld2) from Rattus norvegicus (Rat).